The primary structure comprises 329 residues: Biotin synthase (329 aa).

One can recognise a Radical SAM core domain in the interval 38–262 (NTIQVSTLLS…IMPHSYIRLS (225 aa)). The [4Fe-4S] cluster site is built by cysteine 53, cysteine 57, and cysteine 60. [2Fe-2S] cluster-binding residues include cysteine 97, cysteine 128, cysteine 188, and arginine 260.

This sequence belongs to the radical SAM superfamily. Biotin synthase family. In terms of assembly, homodimer. [4Fe-4S] cluster is required as a cofactor. The cofactor is [2Fe-2S] cluster.

It catalyses the reaction (4R,5S)-dethiobiotin + (sulfur carrier)-SH + 2 reduced [2Fe-2S]-[ferredoxin] + 2 S-adenosyl-L-methionine = (sulfur carrier)-H + biotin + 2 5'-deoxyadenosine + 2 L-methionine + 2 oxidized [2Fe-2S]-[ferredoxin]. Its pathway is cofactor biosynthesis; biotin biosynthesis; biotin from 7,8-diaminononanoate: step 2/2. In terms of biological role, catalyzes the conversion of dethiobiotin (DTB) to biotin by the insertion of a sulfur atom into dethiobiotin via a radical-based mechanism. In Acinetobacter calcoaceticus, this protein is Biotin synthase.